Here is a 356-residue protein sequence, read N- to C-terminus: CX3C chemokine receptor 1 (356 aa).

The Extracellular segment spans residues 1–26 (MTTLYSDWATESFEYDESSEACFIGD). A helical transmembrane segment spans residues 27 to 47 (IVAFGTIFLSIFYSLVFAFGL). At 48 to 68 (VGNLLVVCALTSSRKPKSITD) the chain is on the cytoplasmic side. A helical membrane pass occupies residues 69–89 (IYLLNLALSDLLFVATLPFWT). The Extracellular portion of the chain corresponds to 90-105 (HYVISEQGFHNAVCKL). Residues C103 and C176 are joined by a disulfide bond. The helical transmembrane segment at 106-126 (TTALFFIGFFGGIFFITVISI) threads the bilayer. Residues 127–147 (DRYMAIVLAANSINNRTVQHG) are Cytoplasmic-facing. The chain crosses the membrane as a helical span at residues 148–168 (VTTSLGVWAAAILVAAPQFMF). At 169–195 (TKQKGNECLGDYPEVLQDIWPVLRNTE) the chain is on the extracellular side. The helical transmembrane segment at 196–216 (ANFLGFLLPVLIMSYCYFRII) threads the bilayer. The Cytoplasmic segment spans residues 217-232 (QTLFSCKNHKKAKAIK). Residues 233–253 (LILLVVIVFFLFWTPYNVMIF) form a helical membrane-spanning segment. Over 254-277 (LETLKLYGFFPNCDMKRDLRLALS) the chain is Extracellular. Residues 278 to 298 (VTETVAFSHCCLNPLIYAFAG) form a helical membrane-spanning segment. Residues 299-356 (QKFRRYLRHLSRKCQAVLCGRPVHVSFSPSESQRSRQESIVSSNFTHYTSDGDASLLL) are Cytoplasmic-facing. Phosphothreonine is present on T347.

It belongs to the G-protein coupled receptor 1 family. Found in a ternary complex with CX3CL1 and ITGAV:ITGB3 or ITGA4:ITGB1. This protein is not N-glycosylated which is unusual for G-protein-coupled receptors.

It localises to the cell membrane. Receptor for the C-X3-C chemokine fractalkine (CX3CL1) present on many early leukocyte cells; CX3CR1-CX3CL1 signaling exerts distinct functions in different tissue compartments, such as immune response, inflammation, cell adhesion and chemotaxis. CX3CR1-CX3CL1 signaling mediates cell migratory functions. Responsible for the recruitment of natural killer (NK) cells to inflamed tissues. Acts as a regulator of inflammation process leading to atherogenesis by mediating macrophage and monocyte recruitment to inflamed atherosclerotic plaques, promoting cell survival. Involved in airway inflammation by promoting interleukin 2-producing T helper (Th2) cell survival in inflamed lung. Involved in the migration of circulating monocytes to non-inflamed tissues, where they differentiate into macrophages and dendritic cells. Acts as a negative regulator of angiogenesis, probably by promoting macrophage chemotaxis. Plays a key role in brain microglia by regulating inflammatory response in the central nervous system (CNS) and regulating synapse maturation. Required to restrain the microglial inflammatory response in the CNS and the resulting parenchymal damage in response to pathological stimuli. Involved in brain development by participating in synaptic pruning, a natural process during which brain microglia eliminates extra synapses during postnatal development. Synaptic pruning by microglia is required to promote the maturation of circuit connectivity during brain development. Acts as an important regulator of the gut microbiota by controlling immunity to intestinal bacteria and fungi. Expressed in lamina propria dendritic cells in the small intestine, which form transepithelial dendrites capable of taking up bacteria in order to provide defense against pathogenic bacteria. Required to initiate innate and adaptive immune responses against dissemination of commensal fungi (mycobiota) component of the gut: expressed in mononuclear phagocytes (MNPs) and acts by promoting induction of antifungal IgG antibodies response to confer protection against disseminated C.albicans or C.auris infection. Also acts as a receptor for C-C motif chemokine CCL26, inducing cell chemotaxis. The protein is CX3C chemokine receptor 1 of Oryctolagus cuniculus (Rabbit).